Reading from the N-terminus, the 193-residue chain is Mesogenin-1 (193 aa).

Residues 34-59 (GPFELNQASPSQSLSPAPSLESYSSS) form a disordered region. A compositionally biased stretch (low complexity) spans 40-59 (QASPSQSLSPAPSLESYSSS). One can recognise a bHLH domain in the interval 124-178 (QRRRKASEREKLRMRTLADALHTLRNYLPPVYSQRGQPLTKIQTLKYTIKYIGEL).

It localises to the nucleus. Functionally, involved in specifying the paraxial, but not dorsal, mesoderm. May regulate the expression of T-box transcription factors required for mesoderm formation and differentiation. In Homo sapiens (Human), this protein is Mesogenin-1 (MSGN1).